Here is a 770-residue protein sequence, read N- to C-terminus: Signal transducer and activator of transcription 3 (770 aa).

An N-acetylalanine modification is found at A2. Residues K49 and K87 each carry the N6-acetyllysine modification. Positions 150-162 (DVRKRVQDLEQKM) match the Essential for nuclear import motif. The SH2 domain maps to 580–670 (WNEGYIMGFI…DATNILVSPL (91 aa)). 3 positions are modified to allysine; alternate: K601, K615, and K631. K601, K615, and K631 each carry N6-acetyllysine; alternate. Y640 is modified (phosphotyrosine; by TYK2). The residue at position 685 (K685) is an Allysine; alternate. K685 is modified (N6-acetyllysine; alternate). At Y705 the chain carries Phosphotyrosine; by FER and PTK6. K707 is subject to N6-acetyllysine. Phosphothreonine is present on T714. Position 727 is a phosphoserine; by DYRK2, NLK, NEK6, IRAK1, RPS6KA5, ZIPK/DAPK3 and PKC/PRKCE (S727).

The protein belongs to the transcription factor STAT family. Forms a homodimer or a heterodimer with a related family member (at least STAT1). Component of a promoter-binding complex composed of STAT3, NFATC3 and NFATC4; complex formation is enhanced by calcineurin. Interacts with IL31RA, NCOA1, PELP1, SIPAR, SOCS7, STATIP1 and TMF1. Interacts with IL23R in presence of IL23. Interacts (via SH2 domain) with NLK. Interacts with ARL2BP; the interaction is enhanced by LIF and JAK1 expression. Interacts with KPNA4 and KPNA5; KPNA4 may be the primary mediator of nuclear import. Interacts with CAV2; the interaction is increased on insulin-induced tyrosine phosphorylation of CAV2 and leads to STAT3 activation. Interacts with ARL2BP; interaction is enhanced with ARL2. Interacts with NEK6. Binds to CDK9 when activated and nuclear. Interacts with BMX. Interacts with ZIPK/DAPK3. Interacts with PIAS3; the interaction occurs on stimulation by IL6, CNTF or OSM and inhibits the DNA binding activity of STAT3. In prostate cancer cells, interacts with PRKCE and promotes DNA binding activity of STAT3. Interacts with STMN3, antagonizing its microtubule-destabilizing activity. Interacts with the 'Lys-129' acetylated form of BIRC5/survivin. Interacts with FER. Interacts (via SH2 domain) with EIF2AK2/PKR (via the kinase catalytic domain). Interacts with FGFR4. Interacts with INPP5F; the interaction is independent of STAT3 Tyr-705 phosphorylation status. Interacts with OCIAD1. Interacts with OCIAD2. Interacts (unphosphorylated or phosphorylated at Ser-727) with PHB1. Interacts and may form heterodimers with NHLH1. Found in a complex with SLC39A6, SLC39A10 and with the 'Ser-727' phosphorylated form of STAT3 throughout mitosis. Interacts (when acetylated) with EP300 (via bromo domain); interaction takes place following STAT3 acetylation by EP300 and promotes enhanceosome assembly. Interacts (when acetylated) with BRD2 (via bromo domain); interaction promotes STAT3 recruitment to chromatin and T-helper Th17 cell differentiation. Interacts with FAM220A/SIPAR; the interaction occurs in both the nucleus and the cytoplasm, is enhanced by IL6 and promotes STAT3 dephosphorylation. Interacts in both unphosphorylated and phosphorylated forms with FAM220A but interacts preferentially in the phosphorylated form in the nucleus. Interacts with PTPN2; the interaction is promoted by FAM220A and leads to STAT3 dephosphorylation which negatively regulates STAT3 transcriptional activator activity. Post-translationally, activated through tyrosine phosphorylation by BMX. Tyrosine phosphorylated in response to IL6, IL11, CNTF, LIF, KITLG/SCF, CSF1, EGF, PDGF, IFN-alpha, LEP and OSM. Activated KIT promotes phosphorylation on tyrosine residues and subsequent translocation to the nucleus. Tyrosine phosphorylated in response to constitutively activated FGFR1, FGFR2, FGFR3 and FGFR4. Phosphorylated on serine upon DNA damage, probably by ATM or ATR. Serine phosphorylation is important for the formation of stable DNA-binding STAT3 homodimers and maximal transcriptional activity. ARL2BP may participate in keeping the phosphorylated state of STAT3 within the nucleus. Tyrosine phosphorylated upon stimulation with EGF. Upon LPS challenge, phosphorylated within the nucleus by IRAK1. Upon UV-A treatment, phosphorylated on Ser-727 by RPS6KA5. Dephosphorylation on tyrosine residues by PTPN2 negatively regulates IL6/interleukin-6 signaling. Phosphorylation at Tyr-705 by PTK6, isoform M2 of PKM (PKM2) or FER leads to an increase of its transcriptional activity. Phosphorylation at Tyr-705 is increased in the presence of calcineurin. Phosphorylation at Tyr-640 by TYK2 negatively regulates transcriptional activity. In terms of processing, acetylated on lysine residues by EP300/p300, promoting its activation. Acetylation at Lys-49 and Lys-87 by EP300/p300 promotes its activation. Acetylation at Lys-87 by EP300/p300 promotes its association with BRD2 and recruitment to chromatin. Deacetylated at Lys-49 and Lys-87 by HDAC1. Acetylation at Lys-685 by EP300/p300 promotes its homodimerization and activation. Deacetylated at Lys-685 by HDAC3. Acetylated on lysine residues by CREBBP. Deacetylation by LOXL3 leads to disrupt STAT3 dimerization and inhibit STAT3 transcription activity. Oxidation of lysine residues to allysine on STAT3 preferentially takes place on lysine residues that are acetylated. Some lysine residues are oxidized to allysine by LOXL3, leading to disrupt STAT3 dimerization and inhibit STAT3 transcription activity. Oxidation of lysine residues to allysine on STAT3 preferentially takes place on lysine residues that are acetylated. Post-translationally, (Microbial infection) Phosphorylated on Tyr-705 in the presence of S.typhimurium SarA. As to expression, expressed in ventricular cardiomyocytes (at protein level). Expressed in the lung (at protein level). Expressed in the liver, spleen and kidney. Expressed in the liver.

It is found in the cytoplasm. Its subcellular location is the nucleus. In terms of biological role, signal transducer and transcription activator that mediates cellular responses to interleukins, KITLG/SCF, LEP and other growth factors. Once activated, recruits coactivators, such as NCOA1 or MED1, to the promoter region of the target gene. May mediate cellular responses to activated FGFR1, FGFR2, FGFR3 and FGFR4. Upon activation of IL6ST/gp130 signaling by interleukin-6 (IL6), binds to the IL6-responsive elements identified in the promoters of various acute-phase protein genes. Activated by IL31 through IL31RA. Acts as a regulator of inflammatory response by regulating differentiation of naive CD4(+) T-cells into T-helper Th17 or regulatory T-cells (Treg): acetylation promotes its transcription activity and cell differentiation while deacetylation and oxidation of lysine residues by LOXL3 inhibits differentiation. Involved in cell cycle regulation by inducing the expression of key genes for the progression from G1 to S phase, such as CCND1. Mediates the effects of LEP on melanocortin production, body energy homeostasis and lactation. May play an apoptotic role by transctivating BIRC5 expression under LEP activation. Cytoplasmic STAT3 represses macroautophagy by inhibiting EIF2AK2/PKR activity. Plays a crucial role in basal beta cell functions, such as regulation of insulin secretion. Following JAK/STAT signaling activation and as part of a complex with NFATC3 and NFATC4, binds to the alpha-beta E4 promoter region of CRYAB and activates transcription in cardiomyocytes. Plays an important role in host defense in methicillin-resistant S.aureus lung infection by regulating the expression of the antimicrobial lectin REG3G. The sequence is that of Signal transducer and activator of transcription 3 from Mus musculus (Mouse).